We begin with the raw amino-acid sequence, 299 residues long: Nucleotide-binding protein RER_30260 (299 aa).

Position 19-26 (19-26) interacts with ATP; that stretch reads GLSGAGLS. 70-73 lines the GTP pocket; it reads DVRS.

Belongs to the RapZ-like family.

Functionally, displays ATPase and GTPase activities. This chain is Nucleotide-binding protein RER_30260, found in Rhodococcus erythropolis (strain PR4 / NBRC 100887).